The chain runs to 825 residues: 5-methyltetrahydropteroyltriglutamate--homocysteine methyltransferase (825 aa).

5-methyltetrahydropteroyltri-L-glutamate-binding residues include lysine 19 and asparagine 148. L-homocysteine-binding positions include 498–500 (IGS) and glutamate 551. Residues 498-500 (IGS) and glutamate 551 contribute to the L-methionine site. 5-methyltetrahydropteroyltri-L-glutamate contacts are provided by residues aspartate 556, tyrosine 579, 582–583 (RC), and tryptophan 628. L-homocysteine is bound at residue aspartate 666. Aspartate 666 contributes to the L-methionine binding site. Positions 708, 710, and 732 each coordinate Zn(2+). Histidine 761 functions as the Proton donor in the catalytic mechanism. Cysteine 793 contributes to the Zn(2+) binding site.

The protein belongs to the vitamin-B12 independent methionine synthase family. Zn(2+) is required as a cofactor.

The catalysed reaction is 5-methyltetrahydropteroyltri-L-glutamate + L-homocysteine = tetrahydropteroyltri-L-glutamate + L-methionine. It participates in amino-acid biosynthesis; L-methionine biosynthesis via de novo pathway; L-methionine from L-homocysteine (MetE route): step 1/1. In terms of biological role, catalyzes the transfer of a methyl group from 5-methyltetrahydrofolate to homocysteine resulting in methionine formation. This Dictyostelium discoideum (Social amoeba) protein is 5-methyltetrahydropteroyltriglutamate--homocysteine methyltransferase (metE).